The primary structure comprises 707 residues: Alpha-hemolysin translocation ATP-binding protein HlyB (707 aa).

Residues S3 to I125 form the Peptidase C39 domain. The active site involves H83. Positions F154–Q436 constitute an ABC transmembrane type-1 domain. The next 5 membrane-spanning stretches (helical) occupy residues L158 to V178, L191 to L211, A269 to Y289, L295 to L315, and V388 to G408. One can recognise an ABC transporter domain in the interval I468–Q703. G502–S509 lines the ATP pocket.

It belongs to the ABC transporter superfamily. Protein-1 exporter (TC 3.A.1.109) family. In terms of assembly, homodimer.

The protein localises to the cell inner membrane. Its function is as follows. Part of the ABC transporter complex HlyBD involved in hemolysin export. Transmembrane domains (TMD) form a pore in the inner membrane and the ATP-binding domain (NBD) is responsible for energy generation. The sequence is that of Alpha-hemolysin translocation ATP-binding protein HlyB (hlyB) from Escherichia coli.